A 172-amino-acid chain; its full sequence is Envelope protein UL45 (172 aa).

Residues 1 to 27 (MPLRASEHAYRPLGPGTPPMRARLPAA) lie on the Intravirion side of the membrane. Residues 28–48 (AWVGVGTIIGGVVIIAALVLV) form a helical; Signal-anchor for type II membrane protein membrane-spanning segment. Over 49–172 (PSRASWALSP…TSTRNALGLP (124 aa)) the chain is Virion surface.

This sequence belongs to the herpesviridae HHV-1 UL45 family.

Its subcellular location is the virion membrane. In terms of biological role, important virulence factor of HSV neurotropism. Seems to be required for glycoprotein B-induced fusion. Dispensable for growth in vitro. The protein is Envelope protein UL45 of Human herpesvirus 1 (strain KOS) (HHV-1).